The sequence spans 169 residues: Peptide methionine sulfoxide reductase MsrA (169 aa).

Cys-13 is a catalytic residue.

The protein belongs to the MsrA Met sulfoxide reductase family.

It catalyses the reaction L-methionyl-[protein] + [thioredoxin]-disulfide + H2O = L-methionyl-(S)-S-oxide-[protein] + [thioredoxin]-dithiol. The catalysed reaction is [thioredoxin]-disulfide + L-methionine + H2O = L-methionine (S)-S-oxide + [thioredoxin]-dithiol. Functionally, has an important function as a repair enzyme for proteins that have been inactivated by oxidation. Catalyzes the reversible oxidation-reduction of methionine sulfoxide in proteins to methionine. This chain is Peptide methionine sulfoxide reductase MsrA, found in Mycolicibacterium gilvum (strain PYR-GCK) (Mycobacterium gilvum (strain PYR-GCK)).